The primary structure comprises 337 residues: Anthranilate phosphoribosyltransferase (337 aa).

Residues glycine 81, 84–85 (GD), serine 89, 91–94 (NVST), 109–117 (KHGNRALSS), and alanine 121 contribute to the 5-phospho-alpha-D-ribose 1-diphosphate site. Glycine 81 lines the anthranilate pocket. Residue serine 93 participates in Mg(2+) binding. Residue asparagine 112 participates in anthranilate binding. Arginine 167 serves as a coordination point for anthranilate. Mg(2+) is bound by residues aspartate 226 and glutamate 227.

It belongs to the anthranilate phosphoribosyltransferase family. In terms of assembly, homodimer. It depends on Mg(2+) as a cofactor.

The catalysed reaction is N-(5-phospho-beta-D-ribosyl)anthranilate + diphosphate = 5-phospho-alpha-D-ribose 1-diphosphate + anthranilate. It functions in the pathway amino-acid biosynthesis; L-tryptophan biosynthesis; L-tryptophan from chorismate: step 2/5. Functionally, catalyzes the transfer of the phosphoribosyl group of 5-phosphorylribose-1-pyrophosphate (PRPP) to anthranilate to yield N-(5'-phosphoribosyl)-anthranilate (PRA). The polypeptide is Anthranilate phosphoribosyltransferase (Bradyrhizobium sp. (strain BTAi1 / ATCC BAA-1182)).